Here is a 280-residue protein sequence, read N- to C-terminus: Phosphatidylinositol N-acetylglucosaminyltransferase GPI2 subunit (280 aa).

Residues 1–53 lie on the Cytoplasmic side of the membrane; the sequence is MTRSPWKRLLWLKQEYPDNYTDPSFIELRARQKAESNQKSDRKLSEAARAQIR. The chain crosses the membrane as a helical span at residues 54-74; the sequence is LDFISFYQTILNTSFIYITFT. Residue Tyr-75 is a topological domain, extracellular. A helical transmembrane segment spans residues 76-96; sequence IYYYGFDPIPPTIFLSFITLI. Residues 97 to 108 are Cytoplasmic-facing; it reads ISRTKVDPLLSS. Residues 109–129 traverse the membrane as a helical segment; it reads FMDVKSSLIITFAMLTLSPVL. Over 130–135 the chain is Extracellular; sequence KSLSKT. Residues 136-156 form a helical membrane-spanning segment; that stretch reads TASDSIWTLSFWLTLWYIFVI. Over 157–189 the chain is Cytoplasmic; that stretch reads SSTKSKDKPSNLSTNILVALVAVLSSRLSTTID. The chain crosses the membrane as a helical span at residues 190 to 210; that stretch reads VFCFLLICIQLNIILPTYLSV. At 211–220 the chain is on the extracellular side; the sequence is TNKVVPIISN. Residues 221-241 form a helical membrane-spanning segment; the sequence is IIVYSFLNVALGWIYMLLIFF. At 242–280 the chain is on the cytoplasmic side; it reads ASVFYITVLPKWFIYWKINYHKRDNDLLSTWDARTPILD.

Belongs to the PIGC family. Component of the phosphatidylinositol N-acetylglucosaminyltransferase (GPI-GlcNAc transferase) complex composed of at least GPI1, GPI2, GPI3, GPI15, GPI19 and ERI1. Interacts with ERI1.

The protein resides in the membrane. It carries out the reaction a 1,2-diacyl-sn-glycero-3-phospho-(1D-myo-inositol) + UDP-N-acetyl-alpha-D-glucosamine = a 6-(N-acetyl-alpha-D-glucosaminyl)-1-(1,2-diacyl-sn-glycero-3-phospho)-1D-myo-inositol + UDP + H(+). It participates in glycolipid biosynthesis; glycosylphosphatidylinositol-anchor biosynthesis. Functionally, part of the complex catalyzing the transfer of N-acetylglucosamine from UDP-N-acetylglucosamine to phosphatidylinositol, the first step of GPI biosynthesis. This is Phosphatidylinositol N-acetylglucosaminyltransferase GPI2 subunit (GPI2) from Saccharomyces cerevisiae (strain ATCC 204508 / S288c) (Baker's yeast).